The following is a 443-amino-acid chain: F-box/LRR-repeat protein At2g42720 (443 aa).

Positions methionine 1–aspartate 47 constitute an F-box domain. LRR repeat units lie at residues lysine 139–threonine 167, aspartate 169–aspartate 194, cysteine 201–cysteine 236, serine 271–serine 296, aspartate 323–glycine 348, and cysteine 363–glycine 389.

This chain is F-box/LRR-repeat protein At2g42720, found in Arabidopsis thaliana (Mouse-ear cress).